A 295-amino-acid chain; its full sequence is Diaminopimelate epimerase (295 aa).

Asn-11 and Asn-67 together coordinate substrate. Cys-76 serves as the catalytic Proton donor. Substrate contacts are provided by residues 77 to 78, Asn-171, Asn-210, and 228 to 229; these read GN and ER. Cys-237 (proton acceptor) is an active-site residue. Position 238–239 (238–239) interacts with substrate; the sequence is GT.

The protein belongs to the diaminopimelate epimerase family. Homodimer.

The protein localises to the cytoplasm. The catalysed reaction is (2S,6S)-2,6-diaminopimelate = meso-2,6-diaminopimelate. It participates in amino-acid biosynthesis; L-lysine biosynthesis via DAP pathway; DL-2,6-diaminopimelate from LL-2,6-diaminopimelate: step 1/1. Catalyzes the stereoinversion of LL-2,6-diaminopimelate (L,L-DAP) to meso-diaminopimelate (meso-DAP), a precursor of L-lysine. The chain is Diaminopimelate epimerase from Methanocaldococcus jannaschii (strain ATCC 43067 / DSM 2661 / JAL-1 / JCM 10045 / NBRC 100440) (Methanococcus jannaschii).